Here is a 255-residue protein sequence, read N- to C-terminus: Aliphatic sulfonates import ATP-binding protein SsuB (255 aa).

Residues 12–233 (LLLNAVSKHY…RLGSVRLAEL (222 aa)) form the ABC transporter domain. 44 to 51 (GRSGGGKS) lines the ATP pocket.

This sequence belongs to the ABC transporter superfamily. Aliphatic sulfonates importer (TC 3.A.1.17.2) family. The complex is composed of two ATP-binding proteins (SsuB), two transmembrane proteins (SsuC) and a solute-binding protein (SsuA).

The protein localises to the cell inner membrane. The enzyme catalyses ATP + H2O + aliphatic sulfonate-[sulfonate-binding protein]Side 1 = ADP + phosphate + aliphatic sulfonateSide 2 + [sulfonate-binding protein]Side 1.. Functionally, part of the ABC transporter complex SsuABC involved in aliphatic sulfonates import. Responsible for energy coupling to the transport system. The protein is Aliphatic sulfonates import ATP-binding protein SsuB of Shigella sonnei (strain Ss046).